The following is a 640-amino-acid chain: Auxin efflux carrier component 3 (640 aa).

Over 1–7 (MISWHDL) the chain is Extracellular. A helical membrane pass occupies residues 8–28 (YTVLTAVIPLYVAMILAYGSV). Residues 29-38 (RWWKIFSPDQ) lie on the Cytoplasmic side of the membrane. A helical transmembrane segment spans residues 39 to 59 (CSGINRFVAIFAVPLLSFHFI). Val-51 is a (indol-3-yl)acetate binding site. Residues 60–71 (STNNPYAMNLRF) lie on the Extracellular side of the membrane. Residues 72-92 (IAADTLQKIIMLSLLVLWANF) traverse the membrane as a helical segment. The Cytoplasmic portion of the chain corresponds to 93–101 (TRSGSLEWS). The helical transmembrane segment at 102-122 (ITIFSLSTLPNTLVMGIPLLI) threads the bilayer. Residues Asn-112 and Leu-114 each contribute to the (indol-3-yl)acetate site. The Extracellular segment spans residues 123–131 (AMYGEYSGS). Residues 132 to 152 (LMVQIVVLQCIIWYTLLLFLF) form a helical membrane-spanning segment. Tyr-145 serves as a coordination point for (indol-3-yl)acetate. Over 153–500 (EFRGAKMLIM…LIRNPNTYSS (348 aa)) the chain is Cytoplasmic. Residues Ser-226, Ser-243, and Ser-283 each carry the phosphoserine modification. The segment at 310 to 351 (APNPEFSSTTTSTANKSVNKNPKDVNTNQQTTLPTGGKSNSH) is disordered. Polar residues predominate over residues 314–348 (EFSSTTTSTANKSVNKNPKDVNTNQQTTLPTGGKS). At Thr-322 the chain carries Phosphothreonine. Position 366 is a phosphoserine (Ser-366). 2 disordered regions span residues 372-391 (AGLN…RSDQ) and 404-471 (SHNG…SQRK). Positions 430–442 (GKEEEAERPKDAE) are enriched in basic and acidic residues. A compositionally biased stretch (polar residues) spans 449–460 (APNSTAALQSKT). A helical membrane pass occupies residues 501 to 521 (LIGLIWALVAFRWHVAMPKII). The Extracellular portion of the chain corresponds to 522–524 (QQS). A helical membrane pass occupies residues 525–545 (ISILSDAGLGMAMFSLGLFMA). Residues 546-559 (LQPKLIACGNSVAT) lie on the Cytoplasmic side of the membrane. A helical membrane pass occupies residues 560 to 580 (FAMAVRFLTGPAVMAVAAIAI). The Extracellular segment spans residues 581-585 (GLRGD). The helical transmembrane segment at 586–606 (LLRVAIVQAALPQGIVPFVFA) threads the bilayer. The (indol-3-yl)acetate site is built by Ile-600 and Val-601. Over 607–619 (KEYNVHPAILSTG) the chain is Cytoplasmic. A helical transmembrane segment spans residues 620–640 (VIFGMLIALPITLVYYILLGL).

The protein belongs to the auxin efflux carrier (TC 2.A.69.1) family. As to quaternary structure, homodimer. As to expression, predominantly expressed at the lateral side of shoot endodermis cells as well as root pericycle and columella cells.

It is found in the cell membrane. Auxin efflux carrier activity is competitively inhibited by naptalamate (N-1-naphthylphthalamic acid, NPA). In terms of biological role, acts as a component of the auxin efflux carrier; this activity is enhanced when activated by PID-mediated phosphorylation. Seems to be involved in the lateral auxin transport system. Together with PIN4 and PIN7, involved in the connective auxin transport (CAT) that ensures communication across the shoot system, and modulates strigolactone-mediated shoot branching control. Binds auxins including indole-3-acetic acid (IAA). Coordinated polar localization of PIN3 is directly regulated by the vesicle trafficking process. In Arabidopsis thaliana (Mouse-ear cress), this protein is Auxin efflux carrier component 3.